We begin with the raw amino-acid sequence, 295 residues long: G1/S-specific cyclin-D1 (295 aa).

Positions 28-152 (LRAMLKTEET…LLVNKLKWNL (125 aa)) constitute a Cyclin N-terminal domain. Lysine 269 is covalently cross-linked (Glycyl lysine isopeptide (Lys-Gly) (interchain with G-Cter in ubiquitin)). A disordered region spans residues 269–295 (KATEEEGEVEEEAGLACTPTDVRDVDI). Threonine 286 carries the post-translational modification Phosphothreonine.

Belongs to the cyclin family. Cyclin D subfamily. In terms of assembly, interacts with either CDK4 or CDK6 protein kinase to form a serine/threonine kinase holoenzyme complex. The cyclin subunit imparts substrate specificity to the complex. Component of the ternary complex CCND1/CDK4/CDKN1B required for nuclear translocation and modulation of CDK4-mediated kinase activity. Interacts directly with CDKN1B. Can form similar complexes with either CDKN1A or CDKN2A. Interacts with UHRF2; the interaction ubiquitinates CCND1 and appears to occur independently of phosphorylation. Interacts with USP2. Interacts (via cyclin N-terminal domain) with INSM1 (via N-terminal region); the interaction competes with the binding of CCND1 to CDK4 during cell cycle progression and inhibits CDK4 activity. Interacts with CDK4; the interaction is prevented with the binding of CCND1 to INSM1 during cell cycle progression. Post-translationally, phosphorylation at Thr-286 by MAP kinases is required for ubiquitination and degradation by the DCX(AMBRA1) complex. It also plays an essential role for recognition by the FBXO31 component of SCF (SKP1-cullin-F-box) protein ligase complex following DNA damage. Ubiquitinated at Lys-269 by the DCX(AMBRA1) complex during the transition from G1 to S cell phase, leading to its degradation: ubiquitination is dependent on Thr-286 phosphorylation. The DCX(AMBRA1) complex represents the major regulator of CCND1 stability during the G1/S transition. Also ubiquitinated by the SCF(FBXO4) and Cul7-RING(FBXW8) ubiquitin-protein ligase complexes. Following DNA damage it is ubiquitinated by the SCF(FBXO31) protein ligase complex. SCF(FBXO31) ubiquitination is dependent on Thr-286 phosphorylation. Ubiquitinated also by UHRF2 apparently in a phosphorylation-independent manner. Ubiquitination leads to its degradation and G1 arrest. Deubiquitinated by USP2; leading to its stabilization.

Its subcellular location is the nucleus. The protein resides in the cytoplasm. The protein localises to the nucleus membrane. Regulatory component of the cyclin D1-CDK4 (DC) complex that phosphorylates and inhibits members of the retinoblastoma (RB) protein family including RB1 and regulates the cell-cycle during G(1)/S transition. Phosphorylation of RB1 allows dissociation of the transcription factor E2F from the RB/E2F complex and the subsequent transcription of E2F target genes which are responsible for the progression through the G(1) phase. Hypophosphorylates RB1 in early G(1) phase. Cyclin D-CDK4 complexes are major integrators of various mitogenenic and antimitogenic signals. Also a substrate for SMAD3, phosphorylating SMAD3 in a cell-cycle-dependent manner and repressing its transcriptional activity. Component of the ternary complex, cyclin D1/CDK4/CDKN1B, required for nuclear translocation and activity of the cyclin D-CDK4 complex. Exhibits transcriptional corepressor activity with INSM1 on the NEUROD1 and INS promoters in a cell cycle-independent manner. This is G1/S-specific cyclin-D1 (Ccnd1) from Rattus norvegicus (Rat).